Consider the following 136-residue polypeptide: Protein NrdI (136 aa).

It belongs to the NrdI family.

Probably involved in ribonucleotide reductase function. This chain is Protein NrdI, found in Salmonella arizonae (strain ATCC BAA-731 / CDC346-86 / RSK2980).